The following is a 396-amino-acid chain: S-adenosylmethionine synthase (396 aa).

Histidine 16 provides a ligand contact to ATP. Residue aspartate 18 coordinates Mg(2+). Position 44 (glutamate 44) interacts with K(+). L-methionine-binding residues include glutamate 57 and glutamine 100. The tract at residues 100 to 110 (QSVDIAQGVDR) is flexible loop. ATP-binding positions include 165 to 167 (DAK), aspartate 240, 246 to 247 (RK), alanine 263, and lysine 267. Aspartate 240 is a binding site for L-methionine. Position 271 (lysine 271) interacts with L-methionine.

It belongs to the AdoMet synthase family. In terms of assembly, homotetramer; dimer of dimers. The cofactor is Mg(2+). K(+) is required as a cofactor.

It is found in the cytoplasm. It catalyses the reaction L-methionine + ATP + H2O = S-adenosyl-L-methionine + phosphate + diphosphate. It participates in amino-acid biosynthesis; S-adenosyl-L-methionine biosynthesis; S-adenosyl-L-methionine from L-methionine: step 1/1. Catalyzes the formation of S-adenosylmethionine (AdoMet) from methionine and ATP. The overall synthetic reaction is composed of two sequential steps, AdoMet formation and the subsequent tripolyphosphate hydrolysis which occurs prior to release of AdoMet from the enzyme. This Pseudomonas syringae pv. tomato (strain ATCC BAA-871 / DC3000) protein is S-adenosylmethionine synthase.